We begin with the raw amino-acid sequence, 98 residues long: UPF0235 protein Asuc_1977 (98 aa).

Belongs to the UPF0235 family.

The sequence is that of UPF0235 protein Asuc_1977 from Actinobacillus succinogenes (strain ATCC 55618 / DSM 22257 / CCUG 43843 / 130Z).